The following is a 315-amino-acid chain: Transaldolase (315 aa).

Lys-125 functions as the Schiff-base intermediate with substrate in the catalytic mechanism.

This sequence belongs to the transaldolase family. Type 1 subfamily. As to quaternary structure, homodimer.

It localises to the cytoplasm. It carries out the reaction D-sedoheptulose 7-phosphate + D-glyceraldehyde 3-phosphate = D-erythrose 4-phosphate + beta-D-fructose 6-phosphate. It functions in the pathway carbohydrate degradation; pentose phosphate pathway; D-glyceraldehyde 3-phosphate and beta-D-fructose 6-phosphate from D-ribose 5-phosphate and D-xylulose 5-phosphate (non-oxidative stage): step 2/3. Its function is as follows. Transaldolase is important for the balance of metabolites in the pentose-phosphate pathway. The protein is Transaldolase of Polaromonas naphthalenivorans (strain CJ2).